A 211-amino-acid polypeptide reads, in one-letter code: Arginine exporter protein ArgO (211 aa).

The next 6 helical transmembrane spans lie at 1 to 21, 37 to 57, 68 to 88, 111 to 131, 147 to 167, and 182 to 202; these read MFTY…PLGP, LMIA…GIFG, LLAI…FGAL, IIIT…DTFV, WFAL…ALLA, and IINI…AKEG.

This sequence belongs to the LysE/ArgO transporter (TC 2.A.75) family.

The protein localises to the cell inner membrane. It catalyses the reaction L-arginine(in) = L-arginine(out). Involved in the export of arginine. Important to control the intracellular level of arginine and the correct balance between arginine and lysine. The sequence is that of Arginine exporter protein ArgO from Klebsiella pneumoniae (strain 342).